Consider the following 330-residue polypeptide: Stearoyl-CoA desaturase 5 (330 aa).

The Cytoplasmic portion of the chain corresponds to 1–49; that stretch reads MPGPATDAGKIPFCDAKEEIRAGLESSEGGGGPERPGARGQRQNIVWRN. N49 lines the substrate pocket. A helical transmembrane segment spans residues 50-70; sequence VVLMSLLHLGAVYSLVLIPKA. At 71–72 the chain is on the lumenal side; the sequence is KP. A helical transmembrane segment spans residues 73–93; that stretch reads LTLLWAYFCFLLAALGVTAGA. Fe cation-binding residues include H94 and H99. Positions 94 to 99 match the Histidine box-1 motif; the sequence is HRLWSH. Over 94 to 193 the chain is Cytoplasmic; sequence HRLWSHRSYR…VVRIQRKYYK (100 aa). The substrate site is built by N122, R129, and D130. Positions 131, 134, and 135 each coordinate Fe cation. The Histidine box-2 signature appears at 131-135; that stretch reads HRAHH. 2 residues coordinate substrate: R162 and K163. Residues 194 to 214 traverse the membrane as a helical segment; that stretch reads ISVVLMCFVVPTLVPWYIWGE. Position 215 (S215) is a topological domain, lumenal. The chain crosses the membrane as a helical span at residues 216 to 238; sequence LWNSYFLASILRYTISLNISWLV. W236 contributes to the substrate binding site. The Cytoplasmic portion of the chain corresponds to 239-330; it reads NSAAHMYGNR…RKARTGDSSA (92 aa). The Fe cation site is built by H243, H272, H275, and H276. Residues 272 to 276 carry the Histidine box-3 motif; sequence HNYHH.

This sequence belongs to the fatty acid desaturase type 1 family. In terms of assembly, may self-associate and form homodimers. The cofactor is Fe(2+). Detected in fetal brain, and at lower levels in fetal kidney. Detected in adult brain and pancreas, and at lower levels in kidney and lung. Expressed in spiral ganglion cells and the organ of Corti of fetal cochlea.

The protein localises to the endoplasmic reticulum membrane. The catalysed reaction is octadecanoyl-CoA + 2 Fe(II)-[cytochrome b5] + O2 + 2 H(+) = (9Z)-octadecenoyl-CoA + 2 Fe(III)-[cytochrome b5] + 2 H2O. The enzyme catalyses hexadecanoyl-CoA + 2 Fe(II)-[cytochrome b5] + O2 + 2 H(+) = (9Z)-hexadecenoyl-CoA + 2 Fe(III)-[cytochrome b5] + 2 H2O. Functionally, stearoyl-CoA desaturase that utilizes O(2) and electrons from reduced cytochrome b5 to introduce the first double bond into saturated fatty acyl-CoA substrates. Catalyzes the insertion of a cis double bond at the delta-9 position into fatty acyl-CoA substrates including palmitoyl-CoA and stearoyl-CoA. Gives rise to a mixture of 16:1 and 18:1 unsaturated fatty acids. Involved in neuronal cell proliferation and differentiation through down-regulation of EGFR/AKT/MAPK and Wnt signaling pathways. The sequence is that of Stearoyl-CoA desaturase 5 (SCD5) from Homo sapiens (Human).